Consider the following 215-residue polypeptide: Probable transaldolase (215 aa).

The Schiff-base intermediate with substrate role is filled by lysine 83.

The protein belongs to the transaldolase family. Type 3B subfamily.

It localises to the cytoplasm. It carries out the reaction D-sedoheptulose 7-phosphate + D-glyceraldehyde 3-phosphate = D-erythrose 4-phosphate + beta-D-fructose 6-phosphate. Its pathway is carbohydrate degradation; pentose phosphate pathway; D-glyceraldehyde 3-phosphate and beta-D-fructose 6-phosphate from D-ribose 5-phosphate and D-xylulose 5-phosphate (non-oxidative stage): step 2/3. Transaldolase is important for the balance of metabolites in the pentose-phosphate pathway. This chain is Probable transaldolase, found in Anaeromyxobacter sp. (strain Fw109-5).